The primary structure comprises 476 residues: Transcription factor EB (476 aa).

2 disordered regions span residues 1 to 66 and 107 to 142; these read MASR…PPVP and HISPAQGSPKPPPAASPGVRAGHVLSSSAGNSAPNS. Residues 1 to 167 are interaction with ACSS2; it reads MASRIGLRMQ…DDVIDNIMRL (167 aa). Low complexity predominate over residues 26-44; sequence QQQAVMHYMQQQQQQQQQQ. Phosphoserine is present on residues S109, S114, S122, and S138. The segment covering 132–142 has biased composition (low complexity); that stretch reads SSSAGNSAPNS. The short motif at 136–153 is the Nuclear export signal element; sequence GNSAPNSPMAMLHIGSNP. S142 is modified (phosphoserine; by MTOR). A strong transcription activation domain region spans residues 156–165; that stretch reads ELDDVIDNIM. T183 bears the Phosphothreonine mark. The residue at position 211 (S211) is a Phosphoserine; by MTOR. Position 212 is an S-(2,3-dicarboxypropyl)cysteine (C212). The region spanning 235–288 is the bHLH domain; it reads QKKDNHNLIERRRRFNINDRIKELGMLIPKANDLDVRWNKGTILKASVDYIRRM. The Nuclear localization signal motif lies at 245 to 248; that stretch reads RRRR. A leucine-zipper region spans residues 298–319; that stretch reads LENHSRRLEMTNKQLWLRIQEL. S332 bears the Phosphoserine mark. Residues 349–430 form a disordered region; sequence ELPSEEGPGE…HGSPFPSLSK (82 aa). A compositionally biased stretch (pro residues) spans 369 to 390; the sequence is PEPLPALPPQAPLPLPTQPPSP. S423, S441, S466, S467, and S469 each carry phosphoserine. The segment covering 447–469 has biased composition (low complexity); sequence SDPLLSTMSPEASKASSRRSSFS. The tract at residues 447–476 is disordered; it reads SDPLLSTMSPEASKASSRRSSFSMEEGDVL.

This sequence belongs to the MiT/TFE family. In terms of assembly, homodimer and heterodimer; with TFE3 or MITF. Interacts (when phosphorylated by MTOR) with YWHAZ; promoting retention in the cytosol. Interacts with IRGM; promoting association between TFEB and PPP3CB and dephosphorylation. Interacts with small GTPases Rag (RagA/RRAGA, RagB/RRAGB, RagC/RRAGC and/or RagD/RRAGD); promoting its recruitment to lysosomal membrane in the presence of nutrients. Interacts with ACSS2. Post-translationally, phosphorylation at Ser-211 by MTOR via non-canonical mTORC1 pathway regulates its subcellular location and activity. When nutrients are present, phosphorylation by MTOR promotes association with 14-3-3/YWHA adapters and retention in the cytosol. Inhibition of mTORC1, starvation and lysosomal disruption, promotes dephosphorylation by calcineurin PPP3CB and translocation to the nucleus. Dephosphorylated by calcineurin PPP3CB in response to lysosomal Ca(2+) release. IRGM promotes dephosphorylation by calcineurin PPP3CB, resulting in TFEB nuclear translocation and stimulation of lysosomal biogenesis. Dephosphorylated by phosphatase PPP3CA following Coxsackievirus B3 infection, leading to nuclear translocation. Exported from the nucleus in a mTORC1-dependent manner in response to nutrient availability. In terms of processing, alkylated via a non-enzymatic covalent modification. Itaconate, an anti-inflammatory metabolite generated in response to lipopolysaccharide, alkylates Cys-212, preventing association with 14-3-3/YWHA adapters, thereby promoting nuclear translocation and activity. Sumoylated; does not affect dimerization with MITF. Post-translationally, (Microbial infection) Cleavage by Coxsackievirus B3 protease 3C after site Gln-60. This non-phosphorylated cleavage product retains its ability to interact with TFEB, TFE3 or MITF and presents impaired transcriptional activity, resulting in disruption of lysosomal functions and increased viral infection.

The protein resides in the nucleus. It localises to the cytoplasm. Its subcellular location is the cytosol. It is found in the lysosome membrane. Inhibited by eltrombopag drug, which binds to the bHLH domain and disrupts DNA-binding. Its function is as follows. Transcription factor that acts as a master regulator of lysosomal biogenesis, autophagy, lysosomal exocytosis, lipid catabolism, energy metabolism and immune response. Specifically recognizes and binds E-box sequences (5'-CANNTG-3'); efficient DNA-binding requires dimerization with itself or with another MiT/TFE family member such as TFE3 or MITF. Involved in the cellular response to amino acid availability by acting downstream of MTOR: in the presence of nutrients, TFEB phosphorylation by MTOR promotes its cytosolic retention and subsequent inactivation. Upon starvation or lysosomal stress, inhibition of MTOR induces TFEB dephosphorylation, resulting in nuclear localization and transcription factor activity. Specifically recognizes and binds the CLEAR-box sequence (5'-GTCACGTGAC-3') present in the regulatory region of many lysosomal genes, leading to activate their expression, thereby playing a central role in expression of lysosomal genes. Regulates lysosomal positioning in response to nutrient deprivation by promoting the expression of PIP4P1. Acts as a positive regulator of autophagy by promoting expression of genes involved in autophagy. In association with TFE3, activates the expression of CD40L in T-cells, thereby playing a role in T-cell-dependent antibody responses in activated CD4(+) T-cells and thymus-dependent humoral immunity. Specifically recognizes the gamma-E3 box, a subset of E-boxes, present in the heavy-chain immunoglobulin enhancer. Plays a role in the signal transduction processes required for normal vascularization of the placenta. Involved in the immune response to infection by the bacteria S.aureus, S.typhimurium or S.enterica: infection promotes itaconate production, leading to alkylation, resulting in nuclear localization and transcription factor activity. Itaconate-mediated alkylation activates TFEB-dependent lysosomal biogenesis, facilitating the bacteria clearance during the antibacterial innate immune response. In association with ACSS2, promotes the expression of genes involved in lysosome biogenesis and both autophagy upon glucose deprivation. The polypeptide is Transcription factor EB (Homo sapiens (Human)).